A 1323-amino-acid chain; its full sequence is ABC transporter C family member 12 (1323 aa).

The ABC transmembrane type-1 1 domain maps to 110–396; sequence HCISLFFYSI…LPILIALGIQ (287 aa). The next 6 membrane-spanning stretches (helical) occupy residues 111 to 131, 152 to 172, 227 to 247, 252 to 272, 338 to 358, and 375 to 395; these read CISLFFYSIYVGSQFVGPEIL, MGYYYALIMFGTAMIGSFCNY, VFGILNNGLFALPQIIICLAL, IGWPTFVGLGLMLAAIPFNGL, ILIAMIGAIPTAASILVFSTY, and SYLNLLKIPLGFLPILIALGI. Positions 428 to 652 constitute an ABC transporter 1 domain; sequence VYMKNSTTTW…KLEFASLLQE (225 aa). Position 464–471 (464–471) interacts with ATP; sequence GSVGSGKS. The tract at residues 657-695 is disordered; sequence ENTKGDDSDDDDDKKDDDKKEEKVEKPKQSDKDGTLISE. Basic and acidic residues predominate over residues 672-690; it reads DDDKKEEKVEKPKQSDKDG. A run of 5 helical transmembrane segments spans residues 712–732, 772–792, 840–860, 862–882, and 952–972; these read VTAGGGLLFLFAMILFLLETG, IYIGVGMASIIVTVVRTFSFF, LIATSIAQFFTLMLSVLATLI, ISIIVPWLLIPLAPICILFFI, and WLGLRLDFLGNLIVFFSCIFI. One can recognise an ABC transmembrane type-1 2 domain in the interval 720-1010; the sequence is FLFAMILFLL…GVLQAADTET (291 aa). Positions 1047–1281 constitute an ABC transporter 2 domain; that stretch reads IKFDNLVMRY…QNGLLTWLVN (235 aa). 1081 to 1088 contributes to the ATP binding site; the sequence is GRTGAGKS.

The protein belongs to the ABC transporter superfamily. ABCC family. Conjugate transporter (TC 3.A.1.208) subfamily.

It localises to the membrane. In Dictyostelium discoideum (Social amoeba), this protein is ABC transporter C family member 12 (abcC12).